The chain runs to 560 residues: SWI/SNF complex subunit SWI3A homolog (560 aa).

The segment covering 1-13 (MSPPVAGAASSGD) has biased composition (low complexity). Positions 1–22 (MSPPVAGAASSGDGPPGRPPRE) are disordered. The SWIRM domain maps to 24-127 (YTIPASSGWF…FSASPSRPEA (104 aa)). The 52-residue stretch at 242–293 (HSSSAWTDAETLLLLEGVLKHGDDWDLIAQHVRTKNKSECIARLIQLPFGEH) folds into the SANT domain. A compositionally biased stretch (polar residues) spans 311–330 (TTDGKVNKSTVKESSSQPTE). Disordered stretches follow at residues 311–352 (TTDG…EEHP) and 414–445 (QTRA…PDKK). Over residues 331-342 (TVDDMQIDGNED) the composition is skewed to acidic residues. Basic and acidic residues-rich tracts occupy residues 343–352 (GADKSVEEHP) and 424–445 (RQSD…PDKK).

Interacts with LFR.

Its subcellular location is the nucleus. In terms of biological role, component of a multiprotein complex equivalent of the SWI/SNF complex, an ATP-dependent chromatin-remodeling complex, which is required for the positive and negative regulation of gene expression of a large number of genes. It changes chromatin structure by altering DNA-histone contacts within a nucleosome, leading eventually to a change in nucleosome position, thus facilitating or repressing binding of gene-specific transcription factors. The polypeptide is SWI/SNF complex subunit SWI3A homolog (Oryza sativa subsp. japonica (Rice)).